We begin with the raw amino-acid sequence, 403 residues long: MSSSDAGLEEGPELSITLTLRMLMHGKEVGSIIGKKGETVKRIREQSSARITISEGSCPERITTITGSTAAVFHAVSMIAFKLDEDLCAAPANGGSVSRPPVTLRLVIPASQCGSLIGKAGTKIKEIRETTGAQVQVAGDLLPNSTERAVTVSGVPDAIILCVRQICAVILESPPKGATIPYHPSLSLGTVLLSANQGFSVQGQYGAVTPAEVTKLQQLSGHAVPFASPSVVPGMDPSTQTSSQEFLVPNDLIGCVIGRQGSKISEIRQMSGAHIKIGNQAEGAGERHVTITGSPVSIALAQYLITACLETAKSTSGGTPGSAPADLPTPFSPPLTALPTAPPGLLGTPYAISLSNFIGLKPVPFLALPPASPGPPPGLAAYTAKMAAANGSKKAERQKFSPY.

KH domains lie at 17-67 (TLTL…TITG), 101-154 (PVTL…TVSG), and 241-293 (TSSQ…TITG).

In terms of tissue distribution, widely expressed, with highest levels in testis and lowest in heart.

It is found in the cytoplasm. In terms of biological role, single-stranded nucleic acid binding protein that binds preferentially to oligo dC. This Mus musculus (Mouse) protein is Poly(rC)-binding protein 4 (Pcbp4).